A 335-amino-acid polypeptide reads, in one-letter code: NADH-quinone oxidoreductase subunit H (335 aa).

8 helical membrane-spanning segments follow: residues 12–32 (IIAV…GALL), 81–101 (VIFT…FAVI), 114–134 (IGLL…LFAG), 154–174 (VSYE…VGSF), 187–207 (LWFI…GVAV), 238–258 (FFVG…TLFF), 270–290 (SLAF…FILL), and 307–327 (WKFC…IVLL).

The protein belongs to the complex I subunit 1 family. As to quaternary structure, NDH-1 is composed of 13 different subunits. Subunits NuoA, H, J, K, L, M, N constitute the membrane sector of the complex.

Its subcellular location is the cell inner membrane. The catalysed reaction is a quinone + NADH + 5 H(+)(in) = a quinol + NAD(+) + 4 H(+)(out). NDH-1 shuttles electrons from NADH, via FMN and iron-sulfur (Fe-S) centers, to quinones in the respiratory chain. The immediate electron acceptor for the enzyme in this species is believed to be ubiquinone. Couples the redox reaction to proton translocation (for every two electrons transferred, four hydrogen ions are translocated across the cytoplasmic membrane), and thus conserves the redox energy in a proton gradient. This subunit may bind ubiquinone. This is NADH-quinone oxidoreductase subunit H from Pseudomonas syringae pv. tomato (strain ATCC BAA-871 / DC3000).